The chain runs to 599 residues: Riboflavin biosynthesis protein PYRR, chloroplastic (599 aa).

The transit peptide at 1 to 17 directs the protein to the chloroplast; the sequence is MALSFRISSSSPLICRA. The region spanning 30 to 152 is the CMP/dCMP-type deaminase domain; it reads TTDAAFIRRA…ELRSHGIEVN (123 aa).

The protein in the C-terminal section; belongs to the YbiA family.

It localises to the plastid. The protein localises to the chloroplast. The enzyme catalyses 5-amino-6-(5-phospho-D-ribitylamino)uracil + NADP(+) = 5-amino-6-(5-phospho-D-ribosylamino)uracil + NADPH + H(+). It carries out the reaction 2,5-diamino-6-hydroxy-4-(5-phosphoribosylamino)-pyrimidine + H2O = 2,5,6-triamino-4-hydroxypyrimidine + D-ribose 5-phosphate. It catalyses the reaction 5-amino-6-(5-phospho-D-ribosylamino)uracil + H2O = 5,6-diaminouracil + D-ribose 5-phosphate. It participates in cofactor biosynthesis; riboflavin biosynthesis; 5-amino-6-(D-ribitylamino)uracil from GTP: step 3/4. Pyrimidine reductase involved in the riboflavin biosynthesis pathway. Also has a non-functional N-terminal deaminase domain that lacks the catalytically essential zinc-binding residues. Its function is as follows. Catalyzes the hydrolysis of the N-glycosidic bond in the first two intermediates of riboflavin biosynthesis, which are highly reactive metabolites, yielding relatively innocuous products. Thus, can divert a surplus of harmful intermediates into relatively harmless products and pre-empt the damage these intermediates would otherwise do. Helps maintain flavin levels. Has no activity against GTP, nucleoside monophosphates or ADP-ribose. In Arabidopsis thaliana (Mouse-ear cress), this protein is Riboflavin biosynthesis protein PYRR, chloroplastic (PYRR).